A 177-amino-acid polypeptide reads, in one-letter code: Large ribosomal subunit protein uL6 (177 aa).

Belongs to the universal ribosomal protein uL6 family. Part of the 50S ribosomal subunit.

This protein binds to the 23S rRNA, and is important in its secondary structure. It is located near the subunit interface in the base of the L7/L12 stalk, and near the tRNA binding site of the peptidyltransferase center. The sequence is that of Large ribosomal subunit protein uL6 from Brucella canis (strain ATCC 23365 / NCTC 10854 / RM-666).